Consider the following 885-residue polypeptide: MQTADIRNAWLTYFGDRGHTVVPSASLVSDDPTLLFTVAGMVPFVPYLTGVVPAPFPRATSVQKCIRTLDIEEVGRTPRHGTFFQMNGNFSFGDYFKEQAIAYAWELLTTSEADGGLGFSPDDLWVTVYHEDDEARQAWKRIAGLPDERIQGLGRDTNYWHTGQPGPAGPCSEIFFDRGPAYGADGGPATDDDRYVEIWNLVFMQYLRGAGTGKSDFEILGDLPKKNIDTGMGLERVAFLKQGVENMYEIDQVRPVLDRAAELSGRRYGADHEDDVRMRIVADHVRSSLMLMSDGVRPSNEGRGYILRRLMRRTVRAMRLMGVDAATFGELFPASRDAMKAAYPEVSDDFDRISRLAYAEEETFLRTLSGGTTILDVAVGETKAKGGERIAGDTAFLLHDTFGFPIDLTLEMAEENGLTVDREAFDRLMLEQRTRAKADAKSKKTALADLTVYSEFRAAGETRFTGYDELETGTTILGLIVGGRSVDHAVAGDIAEVILPETSLYAESGGQEADAGSIVGQGFDLEVLDVQKPVKGLISHRVQVRSGEVGVGDAATTVVDADWRRGATQAHSGTHLVHAALRQVLGQDAHQSGSYNRAGYMRLDFAWNQALSSETRSEIEDIANGAVRDDLRVVTRVMPIDEAKQLGAMALFGEKYGDTVRVVDIGGPWSRELCAGTHVSSSAQIGLINVVGESSVGSTNRRIESLVGREAFQDLAVERAIVSQLTSTLKTPREQLPDRIADLMQNLKTAERRIADFEAQALQQRVPALLAQGSRVGAVTLIQESLGAVRSADEVRQLVTLVRERAGSEPVVVALAGDAGGKPTVIVATNQAARDAGAKAGQLARAAAAVLGGGGGGKDDLAQGGGSDVSAIGDALTAVRQALAS.

Residues His571, His575, Cys674, and His678 each coordinate Zn(2+).

Belongs to the class-II aminoacyl-tRNA synthetase family. The cofactor is Zn(2+).

The protein resides in the cytoplasm. The catalysed reaction is tRNA(Ala) + L-alanine + ATP = L-alanyl-tRNA(Ala) + AMP + diphosphate. In terms of biological role, catalyzes the attachment of alanine to tRNA(Ala) in a two-step reaction: alanine is first activated by ATP to form Ala-AMP and then transferred to the acceptor end of tRNA(Ala). Also edits incorrectly charged Ser-tRNA(Ala) and Gly-tRNA(Ala) via its editing domain. This is Alanine--tRNA ligase from Clavibacter michiganensis subsp. michiganensis (strain NCPPB 382).